Consider the following 579-residue polypeptide: Tricyclene synthase 0e23, chloroplastic (579 aa).

Residues 1–66 (MAFCISYLGA…ALCLNAHSTS (66 aa)) constitute a chloroplast transit peptide. N-linked (GlcNAc...) asparagine glycosylation is found at Asn27, Asn204, and Asn317. Residues Asp336 and Asp340 each coordinate Mg(2+). The DDXXD motif motif lies at 336 to 340 (DDIFD). Residues Asn382 and Asn463 are each glycosylated (N-linked (GlcNAc...) asparagine). The Mg(2+) site is built by Asn480 and Glu488. N-linked (GlcNAc...) asparagine glycosylation occurs at Asn507.

Belongs to the terpene synthase family. Tpsg subfamily. It depends on Mg(2+) as a cofactor. Mn(2+) serves as cofactor. Accumulates in flowers; mostly expressed in both upper and lower petal lobes, and, to a lower extent, in tube and stamens.

It localises to the plastid. The protein localises to the chloroplast stroma. It catalyses the reaction (2E)-geranyl diphosphate = tricyclene + diphosphate. The catalysed reaction is (2E)-geranyl diphosphate = (E)-beta-ocimene + diphosphate. It participates in secondary metabolite biosynthesis; terpenoid biosynthesis. Its function is as follows. Contributes to floral scent emission. The polypeptide is Tricyclene synthase 0e23, chloroplastic (0e23) (Antirrhinum majus (Garden snapdragon)).